A 331-amino-acid polypeptide reads, in one-letter code: DNA polymerase IV (331 aa).

The UmuC domain maps to F1–G174. Position 92 (D92) interacts with Mg(2+). Residue E93 is part of the active site.

This sequence belongs to the DNA polymerase type-Y family. In terms of assembly, monomer. The cofactor is Mg(2+).

Its subcellular location is the cytoplasm. The catalysed reaction is DNA(n) + a 2'-deoxyribonucleoside 5'-triphosphate = DNA(n+1) + diphosphate. Poorly processive, error-prone DNA polymerase involved in untargeted mutagenesis. Copies undamaged DNA at stalled replication forks, which arise in vivo from mismatched or misaligned primer ends. These misaligned primers can be extended by PolIV. Exhibits no 3'-5' exonuclease (proofreading) activity. May be involved in translesional synthesis, in conjunction with the beta clamp from PolIII. This Escherichia fergusonii protein is DNA polymerase IV.